Reading from the N-terminus, the 286-residue chain is Polyamine aminopropyltransferase (286 aa).

Residues 5 to 238 (TMWHETLHDQ…GIMTFAWATD (234 aa)) enclose the PABS domain. Glutamine 33 lines the S-methyl-5'-thioadenosine pocket. Spermidine is bound by residues histidine 64 and aspartate 88. S-methyl-5'-thioadenosine is bound by residues glutamate 108 and 140 to 141 (DG). The active-site Proton acceptor is the aspartate 158. A spermidine-binding site is contributed by 158-161 (DCTD). Proline 165 contributes to the S-methyl-5'-thioadenosine binding site.

This sequence belongs to the spermidine/spermine synthase family. As to quaternary structure, homodimer or homotetramer.

It localises to the cytoplasm. The catalysed reaction is S-adenosyl 3-(methylsulfanyl)propylamine + putrescine = S-methyl-5'-thioadenosine + spermidine + H(+). Its pathway is amine and polyamine biosynthesis; spermidine biosynthesis; spermidine from putrescine: step 1/1. In terms of biological role, catalyzes the irreversible transfer of a propylamine group from the amino donor S-adenosylmethioninamine (decarboxy-AdoMet) to putrescine (1,4-diaminobutane) to yield spermidine. This chain is Polyamine aminopropyltransferase, found in Salmonella newport (strain SL254).